The following is a 52-amino-acid chain: Creatine kinase B-type (52 aa).

A Phosphagen kinase C-terminal domain is found at Ala1–Val52. Residues Ala1–Val52 form the Phosphagen kinase N-terminal domain. Positions 13 and 47 each coordinate ATP.

The protein belongs to the ATP:guanido phosphotransferase family. In terms of assembly, dimer of identical or non-identical chains, which can be either B (brain type) or M (muscle type). With MM being the major form in skeletal muscle and myocardium, MB existing in myocardium, and BB existing in many tissues, especially brain. In terms of tissue distribution, expressed in rectal gland, brain, skeletal muscle (at protein level).

It localises to the cytoplasm. The protein localises to the cytosol. The protein resides in the mitochondrion. Its subcellular location is the basal cell membrane. The catalysed reaction is creatine + ATP = N-phosphocreatine + ADP + H(+). Its function is as follows. Reversibly catalyzes the transfer of phosphate between ATP and various phosphogens (e.g. creatine phosphate). Creatine kinase isoenzymes play a central role in energy transduction in tissues with large, fluctuating energy demands, such as skeletal muscle, heart, brain and spermatozoa. In Squalus acanthias (Spiny dogfish), this protein is Creatine kinase B-type.